The primary structure comprises 329 residues: Vomeronasal type-1 receptor 42 (329 aa).

The Extracellular segment spans residues 1–32; that stretch reads MGDILFSSPQSMFSHTMNKNSILHTHSIIGKT. A helical membrane pass occupies residues 33–53; it reads FFSEIGIGISGNSFLLLVHIL. The Cytoplasmic portion of the chain corresponds to 54–65; it reads KFIRGHRPRLTD. Residues 66–86 traverse the membrane as a helical segment; it reads LPIGLLSLIHLLMLLVAAFIA. Residues 87-109 lie on the Extracellular side of the membrane; it reads TDIFISRRGWDDIICKFLVYLYR. Cys101 and Cys188 are oxidised to a cystine. The helical transmembrane segment at 110–130 threads the bilayer; it reads VLRGFSLCTTSMLSILQAIIL. The Cytoplasmic segment spans residues 131–150; the sequence is SPRSSCLAKFKHISPHHISG. A helical membrane pass occupies residues 151 to 171; sequence AILFLSVLYMLIGSQLLVSII. Residues 172–209 lie on the Extracellular side of the membrane; the sequence is ATPNLTMNDFIYVTQSCSILPLSYLMQSIYSTLLAIRE. An N-linked (GlcNAc...) asparagine glycan is attached at Asn175. A helical transmembrane segment spans residues 210-230; the sequence is FFLISLMVLSNWYMVALLSMH. Residues 231–254 lie on the Cytoplasmic side of the membrane; the sequence is RKQTQHLHGTNLSPKKSPEQSATQ. Residues 255–275 form a helical membrane-spanning segment; sequence TILMLISFFLLMTIYDTIVSC. Residues 276-285 lie on the Extracellular side of the membrane; sequence SRTMFLNDPT. Residues 286-306 form a helical membrane-spanning segment; sequence SYSIELFIMHIYATVSPFVFM. Topologically, residues 307 to 329 are cytoplasmic; sequence STEKHIVNFLRSLGKRVINFNLH.

This sequence belongs to the G-protein coupled receptor 1 family.

It localises to the cell membrane. Functionally, putative pheromone receptor implicated in the regulation of social and reproductive behavior. In Mus musculus (Mouse), this protein is Vomeronasal type-1 receptor 42 (Vmn1r42).